The primary structure comprises 509 residues: Lysine--tRNA ligase (509 aa).

2 residues coordinate Mg(2+): E417 and E424.

The protein belongs to the class-II aminoacyl-tRNA synthetase family. In terms of assembly, homodimer. Mg(2+) is required as a cofactor.

Its subcellular location is the cytoplasm. It carries out the reaction tRNA(Lys) + L-lysine + ATP = L-lysyl-tRNA(Lys) + AMP + diphosphate. The protein is Lysine--tRNA ligase of Blochmanniella pennsylvanica (strain BPEN).